The chain runs to 803 residues: Phenylalanine--tRNA ligase beta subunit (803 aa).

Residues serine 40 to tyrosine 150 form the tRNA-binding domain. Residues proline 405–lysine 480 form the B5 domain. Aspartate 458 and glutamate 468 together coordinate Mg(2+). One can recognise an FDX-ACB domain in the interval serine 710–arginine 803.

The protein belongs to the phenylalanyl-tRNA synthetase beta subunit family. Type 1 subfamily. As to quaternary structure, tetramer of two alpha and two beta subunits. Requires Mg(2+) as cofactor.

Its subcellular location is the cytoplasm. It catalyses the reaction tRNA(Phe) + L-phenylalanine + ATP = L-phenylalanyl-tRNA(Phe) + AMP + diphosphate + H(+). The chain is Phenylalanine--tRNA ligase beta subunit from Blochmanniella floridana.